The sequence spans 452 residues: Cobyrinate a,c-diamide synthase (452 aa).

A GATase cobBQ-type domain is found at 244-437 (KIAYAYDEAF…VHINLYTYKE (194 aa)). The active-site Nucleophile is Cys-327.

The protein belongs to the CobB/CbiA family. Requires Mg(2+) as cofactor.

The enzyme catalyses cob(II)yrinate + 2 L-glutamine + 2 ATP + 2 H2O = cob(II)yrinate a,c diamide + 2 L-glutamate + 2 ADP + 2 phosphate + 2 H(+). It functions in the pathway cofactor biosynthesis; adenosylcobalamin biosynthesis; cob(II)yrinate a,c-diamide from sirohydrochlorin (anaerobic route): step 10/10. Catalyzes the ATP-dependent amidation of the two carboxylate groups at positions a and c of cobyrinate, using either L-glutamine or ammonia as the nitrogen source. This chain is Cobyrinate a,c-diamide synthase, found in Caldanaerobacter subterraneus subsp. tengcongensis (strain DSM 15242 / JCM 11007 / NBRC 100824 / MB4) (Thermoanaerobacter tengcongensis).